Here is an 85-residue protein sequence, read N- to C-terminus: Keratin-associated protein 7-1 (85 aa).

Residues 37–82 (GSPLGYGCNGYSSLGYGFGGSSFSNLGCGYGGSFYRPWGSGSGFGY) form a 12 X 2 AA repeats of G-[YCGS] region.

Belongs to the KRTAP type 7 family. Interacts with wool keratins. As to expression, wool.

In terms of biological role, in the wool cortex, wool keratin intermediate filaments are embedded in an interfilamentous matrix, consisting of hair keratin-associated proteins (KRTAP), which are essential for the formation of a rigid and resistant wool shaft through their extensive disulfide bond cross-linking with abundant cysteine residues of wool keratins. The matrix proteins include the high-sulfur and high-glycine-tyrosine keratins. The polypeptide is Keratin-associated protein 7-1 (KRTAP7-1) (Ovis aries (Sheep)).